Consider the following 248-residue polypeptide: Clathrin light chain A (248 aa).

The disordered stretch occupies residues 1–92 (MAELDPFGAP…YYQESNGPTD (92 aa)). The segment covering 13 to 25 (APGGPALGNGVAG) has biased composition (gly residues). Over residues 61-71 (GPQPHGEPPGG) the composition is skewed to pro residues. Residues 100-162 (VDRLQSEPES…QLQKTKANNR (63 aa)) form an involved in binding clathrin heavy chain region. A phosphoserine mark is found at serine 105 and serine 206. Lysine 223 is subject to N6-acetyllysine. The residue at position 236 (serine 236) is a Phosphoserine. Lysine 242 bears the N6-acetyllysine mark.

The protein belongs to the clathrin light chain family. Clathrin coats are formed from molecules containing 3 heavy chains and 3 light chains. Interacts with CALY; the interaction stimulates clathrin self-assembly and clathrin-mediated endocytosis. Interacts with CKAP5 and TACC3 forming the TACC3/ch-TOG/clathrin complex located at spindle inter-microtubules bridges; the complex implicates clathrin triskelions.

Its subcellular location is the cytoplasmic vesicle membrane. The protein localises to the membrane. It localises to the coated pit. The protein resides in the cytoplasm. It is found in the cytoskeleton. Its subcellular location is the spindle. Clathrin is the major protein of the polyhedral coat of coated pits and vesicles. Acts as a component of the TACC3/ch-TOG/clathrin complex proposed to contribute to stabilization of kinetochore fibers of the mitotic spindle by acting as inter-microtubule bridge. This is Clathrin light chain A (CLTA) from Homo sapiens (Human).